We begin with the raw amino-acid sequence, 469 residues long: Cysteine--tRNA ligase (469 aa).

A Zn(2+)-binding site is contributed by Cys28. A 'HIGH' region motif is present at residues 30 to 40; it reads CTVYDLCHIGH. 3 residues coordinate Zn(2+): Cys216, His241, and Glu245. A 'KMSKS' region motif is present at residues 273–277; that stretch reads KMSKS. Residue Lys276 participates in ATP binding.

This sequence belongs to the class-I aminoacyl-tRNA synthetase family. In terms of assembly, monomer. Requires Zn(2+) as cofactor.

It is found in the cytoplasm. The enzyme catalyses tRNA(Cys) + L-cysteine + ATP = L-cysteinyl-tRNA(Cys) + AMP + diphosphate. The chain is Cysteine--tRNA ligase from Colwellia psychrerythraea (strain 34H / ATCC BAA-681) (Vibrio psychroerythus).